A 345-amino-acid chain; its full sequence is Phosphoribosylformylglycinamidine cyclo-ligase (345 aa).

The protein belongs to the AIR synthase family.

The protein resides in the cytoplasm. The catalysed reaction is 2-formamido-N(1)-(5-O-phospho-beta-D-ribosyl)acetamidine + ATP = 5-amino-1-(5-phospho-beta-D-ribosyl)imidazole + ADP + phosphate + H(+). It participates in purine metabolism; IMP biosynthesis via de novo pathway; 5-amino-1-(5-phospho-D-ribosyl)imidazole from N(2)-formyl-N(1)-(5-phospho-D-ribosyl)glycinamide: step 2/2. The protein is Phosphoribosylformylglycinamidine cyclo-ligase of Methanopyrus kandleri (strain AV19 / DSM 6324 / JCM 9639 / NBRC 100938).